Consider the following 723-residue polypeptide: ABC transporter F family member 4 (723 aa).

The disordered stretch occupies residues 1-117 (MGKKKSDESA…KEQKKREAKE (117 aa)). The segment covering 18–31 (SGKDASKDSKKEKL) has biased composition (basic and acidic residues). Polar residues predominate over residues 50 to 65 (GSSSRTKAAPKSTSYT). Residues 72–84 (PSDEEDDGESDEE) show a composition bias toward acidic residues. Positions 95–117 (KSEQRHLEISVTDKEQKKREAKE) are enriched in basic and acidic residues. The ABC transporter 1 domain maps to 163–423 (ITIESFSVSA…EMNKKFDVYD (261 aa)). 195-202 (GPNGMGKS) is an ATP binding site. Disordered regions lie at residues 256–275 (LQKS…DDDD) and 427–472 (KAAK…APEA). The segment covering 266-275 (ENVDGEDDDD) has biased composition (acidic residues). Residues 437–446 (QQEKVKDRAK) show a composition bias toward basic and acidic residues. An ABC transporter 2 domain is found at 496–721 (LQLIEVSFSY…DLQREIKAEV (226 aa)). 530 to 537 (GPNGAGKS) contacts ATP.

The protein belongs to the ABC transporter superfamily. ABCF family. EF3 (TC 3.A.1.121) subfamily.

In Arabidopsis thaliana (Mouse-ear cress), this protein is ABC transporter F family member 4 (ABCF4).